Here is a 292-residue protein sequence, read N- to C-terminus: Acetylglutamate kinase (292 aa).

Substrate is bound by residues 60–61 (GG), arginine 82, and asparagine 187.

It belongs to the acetylglutamate kinase family. ArgB subfamily.

It is found in the cytoplasm. The catalysed reaction is N-acetyl-L-glutamate + ATP = N-acetyl-L-glutamyl 5-phosphate + ADP. It functions in the pathway amino-acid biosynthesis; L-arginine biosynthesis; N(2)-acetyl-L-ornithine from L-glutamate: step 2/4. In terms of biological role, catalyzes the ATP-dependent phosphorylation of N-acetyl-L-glutamate. The chain is Acetylglutamate kinase from Methanobrevibacter smithii (strain ATCC 35061 / DSM 861 / OCM 144 / PS).